A 274-amino-acid chain; its full sequence is 2,3,4,5-tetrahydropyridine-2,6-dicarboxylate N-succinyltransferase (274 aa).

The substrate site is built by arginine 104 and aspartate 141.

It belongs to the transferase hexapeptide repeat family. Homotrimer.

The protein resides in the cytoplasm. It carries out the reaction (S)-2,3,4,5-tetrahydrodipicolinate + succinyl-CoA + H2O = (S)-2-succinylamino-6-oxoheptanedioate + CoA. Its pathway is amino-acid biosynthesis; L-lysine biosynthesis via DAP pathway; LL-2,6-diaminopimelate from (S)-tetrahydrodipicolinate (succinylase route): step 1/3. The protein is 2,3,4,5-tetrahydropyridine-2,6-dicarboxylate N-succinyltransferase of Shewanella loihica (strain ATCC BAA-1088 / PV-4).